Here is a 152-residue protein sequence, read N- to C-terminus: SsrA-binding protein (152 aa).

Belongs to the SmpB family.

It is found in the cytoplasm. Its function is as follows. Required for rescue of stalled ribosomes mediated by trans-translation. Binds to transfer-messenger RNA (tmRNA), required for stable association of tmRNA with ribosomes. tmRNA and SmpB together mimic tRNA shape, replacing the anticodon stem-loop with SmpB. tmRNA is encoded by the ssrA gene; the 2 termini fold to resemble tRNA(Ala) and it encodes a 'tag peptide', a short internal open reading frame. During trans-translation Ala-aminoacylated tmRNA acts like a tRNA, entering the A-site of stalled ribosomes, displacing the stalled mRNA. The ribosome then switches to translate the ORF on the tmRNA; the nascent peptide is terminated with the 'tag peptide' encoded by the tmRNA and targeted for degradation. The ribosome is freed to recommence translation, which seems to be the essential function of trans-translation. The sequence is that of SsrA-binding protein from Helicobacter pylori (strain J99 / ATCC 700824) (Campylobacter pylori J99).